The following is an 88-amino-acid chain: UPF0250 protein Sbal_3280 (88 aa).

This sequence belongs to the UPF0250 family.

This is UPF0250 protein Sbal_3280 from Shewanella baltica (strain OS155 / ATCC BAA-1091).